We begin with the raw amino-acid sequence, 232 residues long: Enolase-phosphatase E1 (232 aa).

The protein belongs to the HAD-like hydrolase superfamily. MasA/MtnC family. In terms of assembly, monomer. Mg(2+) is required as a cofactor.

It carries out the reaction 5-methylsulfanyl-2,3-dioxopentyl phosphate + H2O = 1,2-dihydroxy-5-(methylsulfanyl)pent-1-en-3-one + phosphate. The protein operates within amino-acid biosynthesis; L-methionine biosynthesis via salvage pathway; L-methionine from S-methyl-5-thio-alpha-D-ribose 1-phosphate: step 3/6. It functions in the pathway amino-acid biosynthesis; L-methionine biosynthesis via salvage pathway; L-methionine from S-methyl-5-thio-alpha-D-ribose 1-phosphate: step 4/6. Bifunctional enzyme that catalyzes the enolization of 2,3-diketo-5-methylthiopentyl-1-phosphate (DK-MTP-1-P) into the intermediate 2-hydroxy-3-keto-5-methylthiopentenyl-1-phosphate (HK-MTPenyl-1-P), which is then dephosphorylated to form the acireductone 1,2-dihydroxy-3-keto-5-methylthiopentene (DHK-MTPene). In Xanthomonas campestris pv. campestris (strain B100), this protein is Enolase-phosphatase E1.